The primary structure comprises 311 residues: Ribosomal RNA small subunit methyltransferase H (311 aa).

S-adenosyl-L-methionine contacts are provided by residues 32–34 (GGH), Asp52, Phe78, Asp99, and Gln106.

This sequence belongs to the methyltransferase superfamily. RsmH family.

Its subcellular location is the cytoplasm. The catalysed reaction is cytidine(1402) in 16S rRNA + S-adenosyl-L-methionine = N(4)-methylcytidine(1402) in 16S rRNA + S-adenosyl-L-homocysteine + H(+). Functionally, specifically methylates the N4 position of cytidine in position 1402 (C1402) of 16S rRNA. The polypeptide is Ribosomal RNA small subunit methyltransferase H (Halothermothrix orenii (strain H 168 / OCM 544 / DSM 9562)).